We begin with the raw amino-acid sequence, 334 residues long: D-fructose 1,6-bisphosphatase class 2/sedoheptulose 1,7-bisphosphatase (334 aa).

Mn(2+) is bound by residues aspartate 33, glutamate 57, aspartate 85, and glutamate 88. Substrate is bound by residues 88–90, tyrosine 119, 164–166, and 186–188; these read EGT, RAR, and DGD. A Mn(2+)-binding site is contributed by glutamate 213.

Belongs to the FBPase class 2 family. As to quaternary structure, homotetramer. The cofactor is Mn(2+).

The catalysed reaction is beta-D-fructose 1,6-bisphosphate + H2O = beta-D-fructose 6-phosphate + phosphate. The enzyme catalyses D-sedoheptulose 1,7-bisphosphate + H2O = D-sedoheptulose 7-phosphate + phosphate. It functions in the pathway carbohydrate biosynthesis; Calvin cycle. In terms of biological role, catalyzes the hydrolysis of fructose 1,6-bisphosphate (Fru 1,6-P2) and sedoheptulose 1,7-bisphosphate (Sed 1,7-P2) to fructose 6-phosphate and sedoheptulose 7-phosphate, respectively. The sequence is that of D-fructose 1,6-bisphosphatase class 2/sedoheptulose 1,7-bisphosphatase from Synechococcus sp. (strain CC9605).